A 953-amino-acid chain; its full sequence is Coatomer subunit beta (953 aa).

Threonine 2 bears the N-acetylthreonine mark. 6 HEAT repeats span residues histidine 96–glutamate 131, leucine 132–histidine 168, serine 240–threonine 276, alanine 277–histidine 314, arginine 316–valine 353, and aspartate 396–asparagine 433. N6-acetyllysine is present on lysine 494.

As to quaternary structure, oligomeric complex that consists of at least the alpha, beta, beta', gamma, delta, epsilon and zeta subunits. Interacts (via C-terminus) with HIV-1 Nef; the interaction is direct. Interacts with CAPN8 and PRKCE. Interacts with SCYL1. Interacts with COPG1. Interacts with ARF1 (myristoylated); this interaction is required for binding of COPB1 to Golgi membranes. Interacts (via trunk domain) with ARF1 (via switch I region); the interaction is direct. Interacts with KCNK2 (via N-terminus); this interaction increases the channel-mediated whole cell currents and promotes plasma membrane expression of KCNK2. Interacts with anthrax lethal factor (LF); this interaction may facilitate endosomal vesicle membrane translocation of LF and its release from the lumen of endosomal vesicles to external milieu. Interacts with STX17. Interacts with TMEM115. Interacts with TMEM41B.

The protein localises to the cytoplasm. It localises to the golgi apparatus membrane. Its subcellular location is the cytoplasmic vesicle. The protein resides in the COPI-coated vesicle membrane. It is found in the cell membrane. The protein localises to the endoplasmic reticulum-Golgi intermediate compartment. Functionally, the coatomer is a cytosolic protein complex that binds to dilysine motifs and reversibly associates with Golgi non-clathrin-coated vesicles, which further mediate biosynthetic protein transport from the ER, via the Golgi up to the trans Golgi network. Coatomer complex is required for budding from Golgi membranes, and is essential for the retrograde Golgi-to-ER transport of dilysine-tagged proteins. In mammals, the coatomer can only be recruited by membranes associated to ADP-ribosylation factors (ARFs), which are small GTP-binding proteins; the complex also influences the Golgi structural integrity, as well as the processing, activity, and endocytic recycling of LDL receptors. Plays a functional role in facilitating the transport of kappa-type opioid receptor mRNAs into axons and enhances translation of these proteins. Required for limiting lipid storage in lipid droplets. Involved in lipid homeostasis by regulating the presence of perilipin family members PLIN2 and PLIN3 at the lipid droplet surface and promoting the association of adipocyte surface triglyceride lipase (PNPLA2) with the lipid droplet to mediate lipolysis. Involved in the Golgi disassembly and reassembly processes during cell cycle. Involved in autophagy by playing a role in early endosome function. Plays a role in organellar compartmentalization of secretory compartments including endoplasmic reticulum (ER)-Golgi intermediate compartment (ERGIC), Golgi, trans-Golgi network (TGN) and recycling endosomes, and in biosynthetic transport of CAV1. Promotes degradation of Nef cellular targets CD4 and MHC class I antigens by facilitating their trafficking to degradative compartments. The chain is Coatomer subunit beta (COPB1) from Pongo abelii (Sumatran orangutan).